The primary structure comprises 208 residues: Thymidylate kinase (208 aa).

An ATP-binding site is contributed by 10-17 (GGEGVGKS).

Belongs to the thymidylate kinase family.

The catalysed reaction is dTMP + ATP = dTDP + ADP. In terms of biological role, phosphorylation of dTMP to form dTDP in both de novo and salvage pathways of dTTP synthesis. This is Thymidylate kinase from Rhizorhabdus wittichii (strain DSM 6014 / CCUG 31198 / JCM 15750 / NBRC 105917 / EY 4224 / RW1) (Sphingomonas wittichii).